The following is a 782-amino-acid chain: MESQSILPPPPPPEDASAPPPPPEESAAPPPPPDVSAPPPPPEDLPPPPPEPEVKKKKVGWGTKRPATTPLSVEELVRKKREADAAAARPKFMSKAERERLALEKRAKEVDAQRRRTNGTPNGVDGMDLDTPSRGFRTPNGDSRSIPTGPRAMRNGDGPTPTGPAAMRSRNDSGTTKSDKKVDKRFNEEDEAAAQAALIKQRYMGADQTSNFSAKKKRKRTTDRKFNFEWNAEEDTSGDYNPLYQHRHEANFFGRGRLAGFGDDVADSVAKKYAKALEDRDREAGSIRAREILEMERRRREESTRNQLDKHWSEKKLEHMRERDWRIFKEDFNIATKGGSVPNPMRSWDESGLPKRLLELVDRVGYKEPTPIQRAAIPIAMQSRDLIGVAVTGSGKTAAFLLPLLCYIAELPRIDEFEWRKNDGPYAIVLAPTRELAQQIEIEAKKFTEPLGFNVVSIVGGHSFEEQAYSLRNGAEIIIATPGRLVDCIERRMLVLSQCCYVIMDEADRMIDLGFEEPVNKILDALPVTNEKPDTEEAEDSSAMSRHLGSKDRYRQTMMYTATMPTAVERIARKYLRRPAIVTIGSAGEAVDTVEQRVEMIAGEDKRKKRLGEILSSGDFRPPIIVFVNIKRNCDAIAREIKQWGFSSVTLHGSKTQEQREAALASVRNGSTDVLVATDLAGRGIDVPDVSLVINFNMATSIESYTHRIGRTGRAGKSGVAITFLGNEDADVMYDLKQMLIKSPISRVPEELRKHEAAQSKPTRGAGKKIEEASGFAGKGGW.

The tract at residues 1–192 (MESQSILPPP…DKRFNEEDEA (192 aa)) is disordered. Residues 7–51 (LPPPPPPEDASAPPPPPEESAAPPPPPDVSAPPPPPEDLPPPPPE) are compositionally biased toward pro residues. 3 stretches are compositionally biased toward basic and acidic residues: residues 75 to 84 (ELVRKKREAD), 94 to 114 (SKAE…DAQR), and 177 to 187 (KSDKKVDKRFN). The Q motif motif lies at 346–374 (RSWDESGLPKRLLELVDRVGYKEPTPIQR). Positions 377–582 (IPIAMQSRDL…RKYLRRPAIV (206 aa)) constitute a Helicase ATP-binding domain. 390–397 (AVTGSGKT) contributes to the ATP binding site. The short motif at 505–508 (DEAD) is the DEAD box element. Residues 593 to 756 (TVEQRVEMIA…RVPEELRKHE (164 aa)) enclose the Helicase C-terminal domain. A disordered region spans residues 751 to 782 (ELRKHEAAQSKPTRGAGKKIEEASGFAGKGGW).

This sequence belongs to the DEAD box helicase family. DDX23/PRP28 subfamily. Component of the U5 snRNP complex.

It is found in the cytoplasm. The protein resides in the nucleus. The catalysed reaction is ATP + H2O = ADP + phosphate + H(+). Functionally, ATP-dependent RNA helicase involved in mRNA splicing. May destabilize the U1/5'-splice site duplex to permit an effective competition for the 5'-splice site by the U6 snRNA, resulting in the switch between U1 and U6 at the 5'-splice site. May also act to unwind the U4/U6 base-pairing interaction in the U4/U6/U5 snRNP, facilitating the first covalent step of splicing. This Emericella nidulans (strain FGSC A4 / ATCC 38163 / CBS 112.46 / NRRL 194 / M139) (Aspergillus nidulans) protein is Pre-mRNA-splicing ATP-dependent RNA helicase prp28 (prp28).